Here is a 92-residue protein sequence, read N- to C-terminus: LYR motif-containing protein 4A (92 aa).

It belongs to the complex I LYR family.

This Salmo salar (Atlantic salmon) protein is LYR motif-containing protein 4A (lyrm4a).